Here is a 231-residue protein sequence, read N- to C-terminus: Small ribosomal subunit protein uS3 (231 aa).

A KH type-2 domain is found at 39–107 (IRKHIMKAIP…DVSLNIVEIR (69 aa)).

It belongs to the universal ribosomal protein uS3 family. As to quaternary structure, part of the 30S ribosomal subunit. Forms a tight complex with proteins S10 and S14.

Binds the lower part of the 30S subunit head. Binds mRNA in the 70S ribosome, positioning it for translation. The polypeptide is Small ribosomal subunit protein uS3 (Rhizorhabdus wittichii (strain DSM 6014 / CCUG 31198 / JCM 15750 / NBRC 105917 / EY 4224 / RW1) (Sphingomonas wittichii)).